A 197-amino-acid polypeptide reads, in one-letter code: 3-isopropylmalate dehydratase small subunit (197 aa).

It belongs to the LeuD family. LeuD type 1 subfamily. As to quaternary structure, heterodimer of LeuC and LeuD.

The catalysed reaction is (2R,3S)-3-isopropylmalate = (2S)-2-isopropylmalate. It functions in the pathway amino-acid biosynthesis; L-leucine biosynthesis; L-leucine from 3-methyl-2-oxobutanoate: step 2/4. In terms of biological role, catalyzes the isomerization between 2-isopropylmalate and 3-isopropylmalate, via the formation of 2-isopropylmaleate. The sequence is that of 3-isopropylmalate dehydratase small subunit from Corynebacterium glutamicum (strain ATCC 13032 / DSM 20300 / JCM 1318 / BCRC 11384 / CCUG 27702 / LMG 3730 / NBRC 12168 / NCIMB 10025 / NRRL B-2784 / 534).